The primary structure comprises 75 residues: Putative membrane protein insertion efficiency factor 2 (75 aa).

The protein belongs to the UPF0161 family.

Its subcellular location is the cell membrane. In terms of biological role, could be involved in insertion of integral membrane proteins into the membrane. This is Putative membrane protein insertion efficiency factor 2 from Bacillus licheniformis (strain ATCC 14580 / DSM 13 / JCM 2505 / CCUG 7422 / NBRC 12200 / NCIMB 9375 / NCTC 10341 / NRRL NRS-1264 / Gibson 46).